The sequence spans 371 residues: Aurora kinase (371 aa).

2 stretches are compositionally biased toward polar residues: residues 1–15 (MSMK…SVSL) and 48–80 (RIST…YTTD). A disordered region spans residues 1–84 (MSMKQLETSM…SSYTTDPPSP (84 aa)). One can recognise a Protein kinase domain in the interval 99 to 350 (FEIGKALGKG…LKDMHKHPWI (252 aa)). Residues 105–113 (LGKGKFGKV) and K128 contribute to the ATP site. D222 acts as the Proton acceptor in catalysis.

The protein belongs to the protein kinase superfamily. Ser/Thr protein kinase family. Aurora subfamily.

Its subcellular location is the nucleus. The protein resides in the cytoplasm. It localises to the cytoskeleton. The protein localises to the spindle. It is found in the chromosome. Its subcellular location is the centromere. The protein resides in the kinetochore. The catalysed reaction is L-seryl-[protein] + ATP = O-phospho-L-seryl-[protein] + ADP + H(+). It carries out the reaction L-threonyl-[protein] + ATP = O-phospho-L-threonyl-[protein] + ADP + H(+). Functionally, component of the chromosomal passenger complex (CPC), a complex that acts as a key regulator of chromosome segregation and cytokinesis. Has a role in error-correction of aberrent kinetochore-microtubule attachments to ensure that sister kinetochores become bioriented and connect to opposite poles by promoting spindle assembly checkpoint signaling. This chain is Aurora kinase (IPL1), found in Yarrowia lipolytica (strain CLIB 122 / E 150) (Yeast).